A 351-amino-acid chain; its full sequence is Rhodopsin (351 aa).

The Extracellular portion of the chain corresponds to 1–36 (MNGTEGPFFYIPMSNATGLVRSPYDYPQYYLVPPWG). Asparagine 2 and asparagine 15 each carry an N-linked (GlcNAc...) asparagine glycan. The helical transmembrane segment at 37–61 (YACLAAYMFLLILTGFPVNFLTLYV) threads the bilayer. Residues 62–73 (TIEHKKLRSPLN) lie on the Cytoplasmic side of the membrane. Residues 74–96 (YILLNLAVADLFMVIGGFTTTMW) form a helical membrane-spanning segment. The Extracellular portion of the chain corresponds to 97–110 (TSLNGYFVFGRMGC). Residues cysteine 110 and cysteine 187 are joined by a disulfide bond. The chain crosses the membrane as a helical span at residues 111 to 133 (NIEGFFATLGGEIALWSLVVLSM). The 'Ionic lock' involved in activated form stabilization signature appears at 134–136 (ERW). Residues 134-152 (ERWIVVCKPISNFRFGENH) are Cytoplasmic-facing. A helical transmembrane segment spans residues 153 to 173 (AVMGVAFSWFMAAACAVPPLV). The Extracellular portion of the chain corresponds to 174-202 (GWSRYIPEGMQCSCGIDYYTRAEGFNNES). The N-linked (GlcNAc...) asparagine glycan is linked to asparagine 200. A helical transmembrane segment spans residues 203-224 (FVIYMFVVHFTCPLTIITFCYG). The Cytoplasmic segment spans residues 225 to 252 (RLVCTVKEAAAQQQESETTQRAEREVTR). The helical transmembrane segment at 253–274 (MVIIMFVAFLACWVPYASVAWY) threads the bilayer. Over 275–286 (IFTHQGSEFGPV) the chain is Extracellular. Residues 287-308 (FMTIPAFFAKSSAVYNPVIYIC) form a helical membrane-spanning segment. Lysine 296 bears the N6-(retinylidene)lysine mark. The Cytoplasmic segment spans residues 309-351 (LNKQFRHCMITTLCCGKNPFEEEEGSTTASKTEASSVCSVSPA). 2 S-palmitoyl cysteine lipidation sites follow: cysteine 322 and cysteine 323. Residues 330–351 (EEEGSTTASKTEASSVCSVSPA) are disordered. Residues 334–351 (STTASKTEASSVCSVSPA) show a composition bias toward polar residues.

This sequence belongs to the G-protein coupled receptor 1 family. Opsin subfamily. Phosphorylated on some or all of the serine and threonine residues present in the C-terminal region. In terms of processing, contains one covalently linked retinal chromophore.

The protein localises to the membrane. Its subcellular location is the cell projection. It localises to the cilium. It is found in the photoreceptor outer segment. In terms of biological role, photoreceptor required for image-forming vision at low light intensity. While most salt water fish species use retinal as chromophore, most freshwater fish use 3-dehydroretinal, or a mixture of retinal and 3-dehydroretinal. Light-induced isomerization of 11-cis to all-trans retinal triggers a conformational change that activates signaling via G-proteins. Subsequent receptor phosphorylation mediates displacement of the bound G-protein alpha subunit by arrestin and terminates signaling. This Sardina pilchardus (European pilchard) protein is Rhodopsin (rho).